The primary structure comprises 344 residues: Uroporphyrinogen decarboxylase (344 aa).

Residues 26–30 (RQAGR), F45, D75, Y151, S206, and H320 each bind substrate.

The protein belongs to the uroporphyrinogen decarboxylase family. As to quaternary structure, homodimer.

It localises to the cytoplasm. The catalysed reaction is uroporphyrinogen III + 4 H(+) = coproporphyrinogen III + 4 CO2. The protein operates within porphyrin-containing compound metabolism; protoporphyrin-IX biosynthesis; coproporphyrinogen-III from 5-aminolevulinate: step 4/4. Catalyzes the decarboxylation of four acetate groups of uroporphyrinogen-III to yield coproporphyrinogen-III. The protein is Uroporphyrinogen decarboxylase of Staphylococcus epidermidis (strain ATCC 35984 / DSM 28319 / BCRC 17069 / CCUG 31568 / BM 3577 / RP62A).